A 559-amino-acid chain; its full sequence is Urocanate hydratase (559 aa).

Residues Gly54–Gly55, Gln132, Gly178–Gly180, Glu198, Arg203, Asn244–Ala245, Gln265–His269, Tyr275–Leu276, and Tyr324 each bind NAD(+). Cys412 is a catalytic residue. Residue Gly494 participates in NAD(+) binding.

This sequence belongs to the urocanase family. Requires NAD(+) as cofactor.

It localises to the cytoplasm. The catalysed reaction is 4-imidazolone-5-propanoate = trans-urocanate + H2O. It participates in amino-acid degradation; L-histidine degradation into L-glutamate; N-formimidoyl-L-glutamate from L-histidine: step 2/3. Catalyzes the conversion of urocanate to 4-imidazolone-5-propionate. The sequence is that of Urocanate hydratase from Photorhabdus laumondii subsp. laumondii (strain DSM 15139 / CIP 105565 / TT01) (Photorhabdus luminescens subsp. laumondii).